Consider the following 1005-residue polypeptide: Beta/gamma crystallin domain-containing protein 3 (1005 aa).

5 positions are modified to phosphoserine: Ser122, Ser129, Ser130, Ser136, and Ser140. Disordered regions lie at residues 132–159 and 173–198; these read EDVL…PSSV and NFDG…DWRT. The span at 180–189 shows a compositional bias: acidic residues; sequence QEAEEEEEEA. 9 consecutive Beta/gamma crystallin 'Greek key' domains span residues 367-416, 462-500, 512-556, 557-599, 605-647, 648-690, 701-737, 738-781, and 828-869; these read GCWI…KRVL, GVWL…HPLQ, LKVI…RVIG, GVWV…RYLQ, SSIT…HVKS, GVWV…RPIQ, HLLK…KVLR, GCWL…QPID, and GLWI…RPMK. The Ricin B-type lectin domain maps to 871 to 1003; the sequence is PAVYIRIRNR…GEETQKWDIE (133 aa).

It belongs to the beta/gamma-crystallin family.

This chain is Beta/gamma crystallin domain-containing protein 3 (Crybg3), found in Mus musculus (Mouse).